Consider the following 83-residue polypeptide: Cytochrome b559 subunit alpha (83 aa).

The chain crosses the membrane as a helical span at residues 22 to 36; the sequence is VIHSITIPALFIAGW. Heme is bound at residue His24.

This sequence belongs to the PsbE/PsbF family. As to quaternary structure, heterodimer of an alpha subunit and a beta subunit. PSII is composed of 1 copy each of membrane proteins PsbA, PsbB, PsbC, PsbD, PsbE, PsbF, PsbH, PsbI, PsbJ, PsbK, PsbL, PsbM, PsbT, PsbX, PsbY, PsbZ, Psb30/Ycf12, peripheral proteins PsbO, CyanoQ (PsbQ), PsbU, PsbV and a large number of cofactors. It forms dimeric complexes. Heme b serves as cofactor.

It is found in the cellular thylakoid membrane. Functionally, this b-type cytochrome is tightly associated with the reaction center of photosystem II (PSII). PSII is a light-driven water:plastoquinone oxidoreductase that uses light energy to abstract electrons from H(2)O, generating O(2) and a proton gradient subsequently used for ATP formation. It consists of a core antenna complex that captures photons, and an electron transfer chain that converts photonic excitation into a charge separation. In Synechococcus elongatus (strain ATCC 33912 / PCC 7942 / FACHB-805) (Anacystis nidulans R2), this protein is Cytochrome b559 subunit alpha.